The sequence spans 290 residues: Elongation factor Ts (290 aa).

Positions 82–85 are involved in Mg(2+) ion dislocation from EF-Tu; the sequence is TDFV.

This sequence belongs to the EF-Ts family.

The protein resides in the cytoplasm. Functionally, associates with the EF-Tu.GDP complex and induces the exchange of GDP to GTP. It remains bound to the aminoacyl-tRNA.EF-Tu.GTP complex up to the GTP hydrolysis stage on the ribosome. The sequence is that of Elongation factor Ts from Thiobacillus denitrificans (strain ATCC 25259 / T1).